A 407-amino-acid polypeptide reads, in one-letter code: Lysophospholipid transporter LplT (407 aa).

Helical transmembrane passes span Ala-18 to Leu-38, Phe-53 to Ala-73, Ala-91 to Val-111, Leu-139 to Ala-159, Ile-163 to Leu-183, Trp-229 to Ile-249, Leu-257 to Val-277, Leu-286 to Met-306, Ser-310 to Leu-330, Ala-343 to Val-365, and Ile-375 to Ile-395.

Belongs to the major facilitator superfamily. LplT (TC 2.A.1.42) family.

The protein localises to the cell inner membrane. In terms of biological role, catalyzes the facilitated diffusion of 2-acyl-glycero-3-phosphoethanolamine (2-acyl-GPE) into the cell. The chain is Lysophospholipid transporter LplT from Pectobacterium carotovorum subsp. carotovorum (strain PC1).